The sequence spans 129 residues: Small ribosomal subunit protein uS11 (129 aa).

This sequence belongs to the universal ribosomal protein uS11 family. Part of the 30S ribosomal subunit. Interacts with proteins S7 and S18. Binds to IF-3.

Its function is as follows. Located on the platform of the 30S subunit, it bridges several disparate RNA helices of the 16S rRNA. Forms part of the Shine-Dalgarno cleft in the 70S ribosome. The sequence is that of Small ribosomal subunit protein uS11 from Hahella chejuensis (strain KCTC 2396).